We begin with the raw amino-acid sequence, 409 residues long: Z-DNA-binding protein 1 (409 aa).

Z-binding domains are found at residues 8 to 70 (LGTG…SLGG) and 85 to 147 (SAAQ…TIYR). Glycyl lysine isopeptide (Lys-Gly) (interchain with G-Cter in ubiquitin) cross-links involve residues K17 and K43. Residues 59–87 (SSPAPATWSLGGDGASGDGAPEIPEDSAA) are disordered. 2 short sequence motifs (RIP homotypic interaction motif (RHIM)) span residues 183 to 207 (NSLI…RQTI) and 241 to 265 (LIHL…LERD). 2 disordered regions span residues 269-307 (HPIF…GGTT) and 323-369 (GNNN…TPSD). Residues 270–290 (PIFSFSSSPPESTTTADPETA) are compositionally biased toward low complexity. Residues 337–351 (GTKESADSQELKEDT) are compositionally biased toward basic and acidic residues.

In terms of assembly, homodimer. Interacts (via RIP homotypic interaction motif) with RIPK3; leading to RIPK3 activation and necroptosis; interaction is enhanced by CASP6. Interacts (via RIP homotypic interaction motif) with RIPK1. Component of the AIM2 PANoptosome complex, a multiprotein complex that drives inflammatory cell death (PANoptosis). Post-translationally, ubiquitinated; polyubiquitinated following influenza A virus (IAV) infection. Phosphorylated.

The protein resides in the cytoplasm. Its subcellular location is the nucleus. Its activity is regulated as follows. ZBP1-dependent necroptosis is normally inhibited by RIPK1: RIPK1 inhibits the ZBP1-induced activation of RIPK3 via FADD-mediated recruitment of CASP8, which cleaves RIPK1 and limits TNF-induced necroptosis. Functionally, key innate sensor that recognizes and binds Z-RNA structures, which are produced by a number of viruses, such as herpesvirus, orthomyxovirus or flavivirus, and triggers different forms of cell death. ZBP1 acts as an essential mediator of pyroptosis, necroptosis and apoptosis (PANoptosis), an integral part of host defense against pathogens, by activating RIPK3, caspase-8 (CASP8), and the NLRP3 inflammasome. Key activator of necroptosis, a programmed cell death process in response to death-inducing TNF-alpha family members, via its ability to bind Z-RNA: once activated upon Z-RNA-binding, ZBP1 interacts and stimulates RIPK3 kinase, which phosphorylates and activates MLKL, triggering execution of programmed necrosis. In addition to TNF-induced necroptosis, necroptosis can also take place in the nucleus in response to orthomyxoviruses infection: ZBP1 recognizes and binds Z-RNA structures that are produced in infected nuclei by orthomyxoviruses, such as the influenza A virus (IAV), leading to ZBP1 activation, RIPK3 stimulation and subsequent MLKL phosphorylation, triggering disruption of the nuclear envelope and leakage of cellular DNA into the cytosol. ZBP1-dependent cell death in response to IAV infection promotes interleukin-1 alpha (IL1A) induction in an NLRP3-inflammasome-independent manner: IL1A expression is required for the optimal interleukin-1 beta (IL1B) production, and together, these cytokines promote infiltration of inflammatory neutrophils to the lung, leading to the formation of neutrophil extracellular traps. In addition to its direct role in driving necroptosis via its ability to sense Z-RNAs, also involved in PANoptosis triggered in response to bacterial infection: component of the AIM2 PANoptosome complex, a multiprotein complex that triggers PANoptosis. Also acts as the apical sensor of fungal infection responsible for activating PANoptosis. Involved in CASP8-mediated cell death via its interaction with RIPK1 but independently of its ability to sense Z-RNAs. In some cell types, also able to restrict viral replication by promoting cell death-independent responses. In response to flavivirus infection in neurons, promotes a cell death-independent pathway that restricts viral replication: together with RIPK3, promotes a death-independent transcriptional program that modifies the cellular metabolism via up-regulation expression of the enzyme ACOD1/IRG1 and production of the metabolite itaconate. Itaconate inhibits the activity of succinate dehydrogenase, generating a metabolic state in neurons that suppresses replication of viral genomes. The polypeptide is Z-DNA-binding protein 1 (Rattus norvegicus (Rat)).